We begin with the raw amino-acid sequence, 586 residues long: uncharacterized protein (586 aa).

Coiled coils occupy residues 183 to 293 (THTE…ELEN) and 331 to 400 (FKDK…DKKN).

This is an uncharacterized protein from Bacillus subtilis (strain 168).